Here is a 260-residue protein sequence, read N- to C-terminus: 3-methyl-2-oxobutanoate hydroxymethyltransferase (260 aa).

Mg(2+)-binding residues include Asp-44 and Asp-83. Residues 44-45 (DS), Asp-83, and Lys-113 contribute to the 3-methyl-2-oxobutanoate site. Glu-115 is a Mg(2+) binding site. Glu-183 acts as the Proton acceptor in catalysis.

This sequence belongs to the PanB family. As to quaternary structure, homodecamer; pentamer of dimers. It depends on Mg(2+) as a cofactor.

It is found in the cytoplasm. It catalyses the reaction 3-methyl-2-oxobutanoate + (6R)-5,10-methylene-5,6,7,8-tetrahydrofolate + H2O = 2-dehydropantoate + (6S)-5,6,7,8-tetrahydrofolate. The protein operates within cofactor biosynthesis; (R)-pantothenate biosynthesis; (R)-pantoate from 3-methyl-2-oxobutanoate: step 1/2. Functionally, catalyzes the reversible reaction in which hydroxymethyl group from 5,10-methylenetetrahydrofolate is transferred onto alpha-ketoisovalerate to form ketopantoate. The protein is 3-methyl-2-oxobutanoate hydroxymethyltransferase of Gloeobacter violaceus (strain ATCC 29082 / PCC 7421).